Consider the following 426-residue polypeptide: Serine--tRNA ligase (426 aa).

Residue Thr231 to Glu233 participates in L-serine binding. An ATP-binding site is contributed by Arg262–Glu264. Glu285 serves as a coordination point for L-serine. An ATP-binding site is contributed by Glu349–Ser352. An L-serine-binding site is contributed by Ser385.

Belongs to the class-II aminoacyl-tRNA synthetase family. Type-1 seryl-tRNA synthetase subfamily. Homodimer. The tRNA molecule binds across the dimer.

It localises to the cytoplasm. The catalysed reaction is tRNA(Ser) + L-serine + ATP = L-seryl-tRNA(Ser) + AMP + diphosphate + H(+). The enzyme catalyses tRNA(Sec) + L-serine + ATP = L-seryl-tRNA(Sec) + AMP + diphosphate + H(+). It functions in the pathway aminoacyl-tRNA biosynthesis; selenocysteinyl-tRNA(Sec) biosynthesis; L-seryl-tRNA(Sec) from L-serine and tRNA(Sec): step 1/1. Catalyzes the attachment of serine to tRNA(Ser). Is also able to aminoacylate tRNA(Sec) with serine, to form the misacylated tRNA L-seryl-tRNA(Sec), which will be further converted into selenocysteinyl-tRNA(Sec). The polypeptide is Serine--tRNA ligase (Legionella pneumophila subsp. pneumophila (strain Philadelphia 1 / ATCC 33152 / DSM 7513)).